Reading from the N-terminus, the 765-residue chain is 5-methyltetrahydropteroyltriglutamate--homocysteine methyltransferase (765 aa).

5-methyltetrahydropteroyltri-L-glutamate contacts are provided by residues 18–21 (REWK) and Lys-114. Residues 437–439 (IGS) and Glu-490 each bind L-homocysteine. L-methionine contacts are provided by residues 437–439 (IGS) and Glu-490. Trp-567 provides a ligand contact to 5-methyltetrahydropteroyltri-L-glutamate. Residue Asp-605 coordinates L-homocysteine. Asp-605 provides a ligand contact to L-methionine. Glu-611 contacts 5-methyltetrahydropteroyltri-L-glutamate. Positions 647, 649, and 671 each coordinate Zn(2+). His-700 serves as the catalytic Proton donor. Cys-732 contacts Zn(2+).

This sequence belongs to the vitamin-B12 independent methionine synthase family. Requires Zn(2+) as cofactor.

It carries out the reaction 5-methyltetrahydropteroyltri-L-glutamate + L-homocysteine = tetrahydropteroyltri-L-glutamate + L-methionine. Its pathway is amino-acid biosynthesis; L-methionine biosynthesis via de novo pathway; L-methionine from L-homocysteine (MetE route): step 1/1. Catalyzes the transfer of a methyl group from 5-methyltetrahydrofolate to homocysteine resulting in methionine formation. This Listeria welshimeri serovar 6b (strain ATCC 35897 / DSM 20650 / CCUG 15529 / CIP 8149 / NCTC 11857 / SLCC 5334 / V8) protein is 5-methyltetrahydropteroyltriglutamate--homocysteine methyltransferase.